We begin with the raw amino-acid sequence, 359 residues long: WAT1-related protein At5g64700 (359 aa).

The next 10 membrane-spanning stretches (helical) occupy residues 10 to 30, 37 to 57, 66 to 86, 100 to 120, 135 to 155, 186 to 206, 218 to 238, 256 to 276, 282 to 302, and 306 to 326; these read LMVT…KAVF, FVFV…LAFF, LSFV…TLSL, LAAA…LLFG, LVGI…KGPL, WLKG…WLVL, LYFT…IAIA, AVIY…SWVI, VFLS…SAIL, and IISL…YCVL. EamA domains lie at 18 to 136 and 198 to 326; these read IYTI…AKLV and ILWG…YCVL.

It belongs to the drug/metabolite transporter (DMT) superfamily. Plant drug/metabolite exporter (P-DME) (TC 2.A.7.4) family.

Its subcellular location is the membrane. The polypeptide is WAT1-related protein At5g64700 (Arabidopsis thaliana (Mouse-ear cress)).